Here is a 204-residue protein sequence, read N- to C-terminus: Terpene cyclase ausL (204 aa).

Transmembrane regions (helical) follow at residues 19–39 (LSEM…LAMV), 49–69 (AIAV…AWIY), 75–95 (HWQG…AATL), 114–134 (LVLL…CLAL), and 138–158 (GALG…SAAV).

This sequence belongs to the paxB family.

The protein resides in the membrane. It functions in the pathway secondary metabolite biosynthesis; terpenoid biosynthesis. In terms of biological role, terpene cyclase; part of the gene cluster B that mediates the biosynthesis of austinol and dehydroaustinol, two fungal meroterpenoids. The first step of the pathway is the synthesis of 3,5-dimethylorsellinic acid by the polyketide synthase ausA. 3,5-dimethylorsellinic acid is then prenylated by the polyprenyl transferase ausN. Further epoxidation by the FAD-dependent monooxygenase ausM and cyclization by the probable terpene cyclase ausL lead to the formation of protoaustinoid A. Protoaustinoid A is then oxidized to spiro-lactone preaustinoid A3 by the combined action of the FAD-binding monooxygenases ausB and ausC, and the dioxygenase ausE. Acid-catalyzed keto-rearrangement and ring contraction of the tetraketide portion of preaustinoid A3 by ausJ lead to the formation of preaustinoid A4. The aldo-keto reductase ausK, with the help of ausH, is involved in the next step by transforming preaustinoid A4 into isoaustinone which is in turn hydroxylated by the P450 monooxygenase ausI to form austinolide. Finally, the cytochrome P450 monooxygenase ausG modifies austinolide to austinol. Austinol can be further modified to dehydroaustinol which forms a diffusible complex with diorcinol that initiates conidiation. Due to genetic rearrangements of the clusters and the subsequent loss of some enzymes, the end products of the Emericella nidulans austinoid biosynthesis clusters are austinol and dehydroaustinol, even if additional enzymes, such as the O-acetyltransferase ausQ and the cytochrome P450 monooxygenase ausR are still functional. This Emericella nidulans (strain FGSC A4 / ATCC 38163 / CBS 112.46 / NRRL 194 / M139) (Aspergillus nidulans) protein is Terpene cyclase ausL.